The chain runs to 664 residues: Lamin tail domain-containing protein 2 (664 aa).

A disordered region spans residues 1–40; it reads MAPKSCQESEDKQVSPAPAGVQPDSSDLGSPVGTPVDRVA. Positions 118 to 169 form a coiled coil; that stretch reads QDKFLRNQVQKLTLELKAQKEQAQQEKQQLEEKLQQNLWAKQQLEAELQTFQ. A compositionally biased stretch (polar residues) spans 245 to 260; it reads SDQKQSQPPTSETYTL. Disordered stretches follow at residues 245 to 272 and 286 to 329; these read SDQK…TEKP and TSSS…MQEH. Over residues 286–298 the composition is skewed to low complexity; that stretch reads TSSSERTQSDTSS. Positions 312 to 325 are enriched in polar residues; it reads GHPSQGTNLASSEQ. The region spanning 362-481 is the LTD domain; that stretch reads PYTRPQLNPF…QVLSEHQATP (120 aa). The disordered stretch occupies residues 504-563; the sequence is SESEPDVHPGEQQCRPSSPQKGRAKDAGARRKKPGPGVRQHRHSSTSGLRASRTLHPTET. The segment covering 533–547 has biased composition (basic residues); it reads RRKKPGPGVRQHRHS.

The sequence is that of Lamin tail domain-containing protein 2 (Lmntd2) from Mus musculus (Mouse).